Consider the following 266-residue polypeptide: 3-methyl-2-oxobutanoate hydroxymethyltransferase (266 aa).

Mg(2+)-binding residues include aspartate 45 and aspartate 84. 3-methyl-2-oxobutanoate contacts are provided by residues 45–46 (DS), aspartate 84, and lysine 112. Glutamate 114 provides a ligand contact to Mg(2+). Residue glutamate 181 is the Proton acceptor of the active site.

Belongs to the PanB family. As to quaternary structure, homodecamer; pentamer of dimers. It depends on Mg(2+) as a cofactor.

It localises to the cytoplasm. The enzyme catalyses 3-methyl-2-oxobutanoate + (6R)-5,10-methylene-5,6,7,8-tetrahydrofolate + H2O = 2-dehydropantoate + (6S)-5,6,7,8-tetrahydrofolate. The protein operates within cofactor biosynthesis; (R)-pantothenate biosynthesis; (R)-pantoate from 3-methyl-2-oxobutanoate: step 1/2. In terms of biological role, catalyzes the reversible reaction in which hydroxymethyl group from 5,10-methylenetetrahydrofolate is transferred onto alpha-ketoisovalerate to form ketopantoate. This is 3-methyl-2-oxobutanoate hydroxymethyltransferase from Pseudomonas syringae pv. tomato (strain ATCC BAA-871 / DC3000).